The following is a 63-amino-acid chain: MRIHYLLFAFLLVLLSPPAAFSKKINNPVSCLRKGGRCWNRCIGNTRQIGSCGVPFLKCCKRK.

Residues 1-20 (MRIHYLLFAFLLVLLSPPAA) form the signal peptide. The propeptide occupies 21–22 (FS). 3 cysteine pairs are disulfide-bonded: C31–C59, C38–C52, and C42–C60.

This sequence belongs to the beta-defensin family. LAP/TAP subfamily. In terms of tissue distribution, highest expression in salivary glands, epididymis, ovary and pancreas and to a lesser extent in lung, liver and brain. Low or no expression in skeletal muscle and tongue.

It is found in the secreted. Its function is as follows. Antimicrobial activity against Gram-negative bacteria E.coli and P.aeruginosa. The polypeptide is Beta-defensin 3 (Defb3) (Mus musculus (Mouse)).